The chain runs to 167 residues: MASDGEDISVTPAESVTSATDTEEEDIDSPLMQSELHSDEEQPDVEEVPLTTEESEMDELIKQLEDYSPTIPDALTMHILKTAGFCTVDPKIVRLVSVSAQKFISDIANDALQHCKTRTTNIQHSSGHSSSKDKKNPKDRKYTLAMEDLVPALADHGITMRKPQYFV.

2 disordered regions span residues 1–56 (MASD…EESE) and 119–139 (TTNI…NPKD). Acidic residues predominate over residues 41-56 (EQPDVEEVPLTTEESE). Positions 130 to 139 (SSKDKKNPKD) are enriched in basic and acidic residues.

Belongs to the TAF10 family. In terms of assembly, belongs to the TFIID complex which is composed of TATA binding protein (Tbp) and a number of TBP-associated factors (TAFs). Also a member of the histone acetylase (HAT) complex. In terms of tissue distribution, at embryonic stage 9, highest expression is detected within the ectoderm, ventral chord, and anterior foregut primordium. Later in development preferential expression is in the foregut, proventriculus, and central nervous system. Coexpressed with Taf10b in the lateral epidermis and anal plate.

The protein resides in the cytoplasm. The protein localises to the nucleus. Its function is as follows. TFIID is a multimeric protein complex that plays a central role in mediating promoter responses to various activators and repressors. This is Transcription initiation factor TFIID subunit 10 from Drosophila melanogaster (Fruit fly).